The following is a 37-amino-acid chain: Large ribosomal subunit protein bL36c (37 aa).

This sequence belongs to the bacterial ribosomal protein bL36 family.

The protein localises to the plastid. The chain is Large ribosomal subunit protein bL36c from Helicosporidium sp. subsp. Simulium jonesii (Green alga).